The following is a 215-amino-acid chain: UPF0056 membrane protein BU267 (215 aa).

6 helical membrane-spanning segments follow: residues 14–34 (FFIG…FTTM), 56–76 (LILL…GISI), 81–101 (IAGG…QFIK), 120–140 (VVPL…TIVW), 150–170 (LFLC…CFEA), and 189–209 (IMGL…IGAI).

It belongs to the UPF0056 (MarC) family.

The protein resides in the cell membrane. The chain is UPF0056 membrane protein BU267 from Buchnera aphidicola subsp. Acyrthosiphon pisum (strain APS) (Acyrthosiphon pisum symbiotic bacterium).